The primary structure comprises 286 residues: Cytochrome bo(3) ubiquinol oxidase subunit 2 (286 aa).

Residues 1–24 (MQFIKYKSYILKFLLVSCIFCING) form the signal peptide. The N-palmitoyl cysteine moiety is linked to residue Cys25. The S-diacylglycerol cysteine moiety is linked to residue Cys25. Residues 25-44 (CDCTILCPNGLIAQEQRFVL) lie on the Extracellular side of the membrane. A helical membrane pass occupies residues 45 to 67 (FVSFFTMLLIIIPVIFMTIFFVL). Residues 68-85 (RYRESNFSKTYDPKWSHS) are Cytoplasmic-facing. A helical membrane pass occupies residues 86 to 108 (NIIELLIWGIPIIIIVFLSIFSW). Residues 109–286 (KSVHDLDPKK…VIANVLKISL (178 aa)) lie on the Extracellular side of the membrane.

This sequence belongs to the cytochrome c oxidase subunit 2 family. In terms of assembly, heterooctamer of two A chains, two B chains, two C chains and two D chains.

The protein localises to the cell membrane. Functionally, cytochrome bo(3) ubiquinol terminal oxidase is the component of the aerobic respiratory chain of E.coli that predominates when cells are grown at high aeration. Has proton pump activity across the membrane in addition to electron transfer, pumping 2 protons/electron. This is Cytochrome bo(3) ubiquinol oxidase subunit 2 (cyoA) from Buchnera aphidicola subsp. Baizongia pistaciae (strain Bp).